A 101-amino-acid chain; its full sequence is Small ribosomal subunit protein uS14 (101 aa).

The segment at 48 to 69 is disordered; the sequence is LSKLPRDSSPSRHRSRCELSGR. The span at 51–68 shows a compositional bias: basic and acidic residues; it reads LPRDSSPSRHRSRCELSG.

This sequence belongs to the universal ribosomal protein uS14 family. Part of the 30S ribosomal subunit. Contacts proteins S3 and S10.

Functionally, binds 16S rRNA, required for the assembly of 30S particles and may also be responsible for determining the conformation of the 16S rRNA at the A site. In Stenotrophomonas maltophilia (strain R551-3), this protein is Small ribosomal subunit protein uS14.